The sequence spans 847 residues: DNA gyrase subunit A (847 aa).

One can recognise a Topo IIA-type catalytic domain in the interval leucine 34 to leucine 533. Tyrosine 122 acts as the O-(5'-phospho-DNA)-tyrosine intermediate in catalysis. Residues glutamine 560 to glycine 566 carry the GyrA-box motif.

The protein belongs to the type II topoisomerase GyrA/ParC subunit family. As to quaternary structure, heterotetramer, composed of two GyrA and two GyrB chains. In the heterotetramer, GyrA contains the active site tyrosine that forms a transient covalent intermediate with DNA, while GyrB binds cofactors and catalyzes ATP hydrolysis.

It is found in the cytoplasm. The enzyme catalyses ATP-dependent breakage, passage and rejoining of double-stranded DNA.. In terms of biological role, a type II topoisomerase that negatively supercoils closed circular double-stranded (ds) DNA in an ATP-dependent manner to modulate DNA topology and maintain chromosomes in an underwound state. Negative supercoiling favors strand separation, and DNA replication, transcription, recombination and repair, all of which involve strand separation. Also able to catalyze the interconversion of other topological isomers of dsDNA rings, including catenanes and knotted rings. Type II topoisomerases break and join 2 DNA strands simultaneously in an ATP-dependent manner. The polypeptide is DNA gyrase subunit A (Buchnera aphidicola subsp. Baizongia pistaciae (strain Bp)).